A 299-amino-acid chain; its full sequence is Tyrosine recombinase XerC (299 aa).

A Core-binding (CB) domain is found at 1–85 (MERQLDAYCE…AVRGLYHYLN (85 aa)). The 180-residue stretch at 106–285 (RLPKTLDTDR…DFQHLAAVYD (180 aa)) folds into the Tyr recombinase domain. Active-site residues include Arg-146, Lys-170, His-237, Arg-240, and His-263. Residue Tyr-272 is the O-(3'-phospho-DNA)-tyrosine intermediate of the active site.

It belongs to the 'phage' integrase family. XerC subfamily. As to quaternary structure, forms a cyclic heterotetrameric complex composed of two molecules of XerC and two molecules of XerD.

It localises to the cytoplasm. Its function is as follows. Site-specific tyrosine recombinase, which acts by catalyzing the cutting and rejoining of the recombining DNA molecules. The XerC-XerD complex is essential to convert dimers of the bacterial chromosome into monomers to permit their segregation at cell division. It also contributes to the segregational stability of plasmids. The chain is Tyrosine recombinase XerC from Pseudomonas fluorescens (strain Pf0-1).